A 155-amino-acid chain; its full sequence is SGSQDLEPSSGLVTDAIADSESEDDEDLDVPIPSRFDRRVSVCAETYNPDEEEEDTDPRVIHPKTDQQRCRLQEACKDILLFKNLDQEQLSQVLDAMFERTVKVDEHVIDQRDDGDNFYVIERGTYDILVTKDNQTRSVGQYDNHGSFGELALMY.

The segment at 1–34 (SGSQDLEPSSGLVTDAIADSESEDDEDLDVPIPS) is disordered. Positions 1 to 81 (SGSQDLEPSS…LQEACKDILL (81 aa)) are dimerization and phosphorylation. Residues 18–29 (ADSESEDDEDLD) show a composition bias toward acidic residues. Phosphoserine is present on residues Ser20 and Ser22. Ser41 is modified (phosphoserine; by PKA). 3',5'-cyclic AMP is bound by residues 82–155 (FKNL…ALMY) and Glu150.

Belongs to the cAMP-dependent kinase regulatory chain family. As to quaternary structure, the inactive form of the enzyme is composed of two regulatory chains and two catalytic chains. Activation by cAMP produces two active catalytic monomers and a regulatory dimer that binds four cAMP molecules. Interacts with AKAP4 and CBFA2T3. Interacts with the phosphorylated form of PJA2. Interacts with MYRIP; this interaction may link PKA to components of the exocytosis machinery, thus facilitating exocytosis, including insulin release. Forms a complex composed of PRKAR2A, GSK3B and GSKIP through GSKIP interaction; facilitates PKA-induced phosphorylation and regulates GSK3B activity. Interacts with ADCY8; inhibits adenylate cyclase activity through PKA phosphorylation. Phosphorylated by the activated catalytic chain. As to expression, four types of regulatory chains are found: I-alpha, I-beta, II-alpha, and II-beta. Their expression varies among tissues and is in some cases constitutive and in others inducible.

Its subcellular location is the cytoplasm. The protein localises to the cell membrane. Its function is as follows. Regulatory subunit of the cAMP-dependent protein kinases involved in cAMP signaling in cells. Type II regulatory chains mediate membrane association by binding to anchoring proteins, including the MAP2 kinase. The polypeptide is cAMP-dependent protein kinase type II-alpha regulatory subunit (PRKAR2A) (Sus scrofa (Pig)).